An 862-amino-acid chain; its full sequence is Ecdysone-induced protein 78C (862 aa).

Disordered stretches follow at residues 28 to 83, 97 to 138, 173 to 210, and 230 to 353; these read SSEQ…EEAL, LHFF…KQHH, ASLSPQQQQQRQHTHQQQQQQQQQQQHPGQQQHQLNCT, and ASNH…NNNN. Positions 37–46 are enriched in basic and acidic residues; that stretch reads KQEDLIKDFT. Positions 47–82 are enriched in acidic residues; sequence RDEEEQPSEEEAEEEDNEEDEEEEGEEEEEDEDEEA. The span at 105 to 119 shows a compositional bias: polar residues; the sequence is DSSTQGAYSEANSLE. Low complexity-rich tracts occupy residues 173-206, 230-291, 308-335, and 342-353; these read ASLSPQQQQQRQHTHQQQQQQQQQQQHPGQQQHQ, ASNH…NNSV, QQQQPLPTTQLQQQQQHQQQLQHPQQQQ, and SSSSNGSSNNNN. The nuclear receptor DNA-binding region spans 360–435; it reads FVPCKVCGDK…AGMSRDSVRY (76 aa). NR C4-type zinc fingers lie at residues 363–383 and 399–418; these read CKVCGDKASGYHYGVTSCEGC and CLRDGKCLVIRLNRNRCQYC. Residues 444–557 are disordered; that stretch reads ELNGAAASSA…NNNSSSGNAS (114 aa). A compositionally biased stretch (low complexity) spans 447 to 460; it reads GAAASSAAAGAPAS. Polar residues predominate over residues 463-472; sequence VDDSTSSTLH. Over residues 475 to 508 the composition is skewed to low complexity; it reads HLQQQQQQHLLQQQQQQQHQPQLQQHHQLQQQPH. Residues 516–533 are compositionally biased toward polar residues; sequence TPSTPQTPQMCSIASSPS. A compositionally biased stretch (low complexity) spans 539 to 555; sequence NSANNNNNNNNNSSSGN. Residues 626–855 enclose the NR LBD domain; sequence YTEELTRELM…PPLFAEIFDI (230 aa).

It belongs to the nuclear hormone receptor family. NR1 subfamily.

It is found in the nucleus. Its function is as follows. Induces the early late puff 78C which triggers puparium formation and development. This is Ecdysone-induced protein 78C (Eip78C) from Drosophila melanogaster (Fruit fly).